The sequence spans 286 residues: Small ribosomal subunit protein uS15m (286 aa).

Residues 1–33 constitute a mitochondrion transit peptide; the sequence is MSIVGRNAILNLRISLCPLFMGKRSFVSSPVSN.

It belongs to the universal ribosomal protein uS15 family. Component of the mitochondrial small ribosomal subunit (mt-SSU). Mature yeast 74S mitochondrial ribosomes consist of a small (37S) and a large (54S) subunit. The 37S small subunit contains a 15S ribosomal RNA (15S mt-rRNA) and 34 different proteins. The 54S large subunit contains a 21S rRNA (21S mt-rRNA) and 46 different proteins. Post-translationally, the precursor is processed in two steps involving mitochondrial intermediate peptidase (MIP) and mitochondrial processing peptidase (MPP).

Its subcellular location is the mitochondrion. In terms of biological role, component of the mitochondrial ribosome (mitoribosome), a dedicated translation machinery responsible for the synthesis of mitochondrial genome-encoded proteins, including at least some of the essential transmembrane subunits of the mitochondrial respiratory chain. The mitoribosomes are attached to the mitochondrial inner membrane and translation products are cotranslationally integrated into the membrane. The sequence is that of Small ribosomal subunit protein uS15m (MRPS28) from Saccharomyces cerevisiae (strain ATCC 204508 / S288c) (Baker's yeast).